Consider the following 477-residue polypeptide: 3-isopropylmalate dehydratase large subunit 1 (477 aa).

[4Fe-4S] cluster-binding residues include Cys-357, Cys-417, and Cys-420.

Belongs to the aconitase/IPM isomerase family. LeuC type 1 subfamily. As to quaternary structure, heterodimer of LeuC and LeuD. The cofactor is [4Fe-4S] cluster.

It carries out the reaction (2R,3S)-3-isopropylmalate = (2S)-2-isopropylmalate. The protein operates within amino-acid biosynthesis; L-leucine biosynthesis; L-leucine from 3-methyl-2-oxobutanoate: step 2/4. Its function is as follows. Catalyzes the isomerization between 2-isopropylmalate and 3-isopropylmalate, via the formation of 2-isopropylmaleate. In Bradyrhizobium diazoefficiens (strain JCM 10833 / BCRC 13528 / IAM 13628 / NBRC 14792 / USDA 110), this protein is 3-isopropylmalate dehydratase large subunit 1.